The chain runs to 115 residues: uncharacterized protein (115 aa).

This is an uncharacterized protein from Haemophilus influenzae (strain ATCC 51907 / DSM 11121 / KW20 / Rd).